We begin with the raw amino-acid sequence, 420 residues long: Tryptophan synthase beta chain (420 aa).

Position 99 is an N6-(pyridoxal phosphate)lysine (lysine 99).

It belongs to the TrpB family. Tetramer of two alpha and two beta chains. It depends on pyridoxal 5'-phosphate as a cofactor.

The enzyme catalyses (1S,2R)-1-C-(indol-3-yl)glycerol 3-phosphate + L-serine = D-glyceraldehyde 3-phosphate + L-tryptophan + H2O. It functions in the pathway amino-acid biosynthesis; L-tryptophan biosynthesis; L-tryptophan from chorismate: step 5/5. In terms of biological role, the beta subunit is responsible for the synthesis of L-tryptophan from indole and L-serine. This is Tryptophan synthase beta chain from Helicobacter hepaticus (strain ATCC 51449 / 3B1).